A 292-amino-acid chain; its full sequence is 11-beta-hydroxysteroid dehydrogenase 1 (292 aa).

Residues 7 to 24 (YLLPILGIFLAYYYYSAN) form a helical membrane-spanning segment.

It belongs to the short-chain dehydrogenases/reductases (SDR) family. As to quaternary structure, homodimer. Expressed highest in liver and ovaries (corpora lutea, granulosa cells, thecal, uterine caruncle and intercarunculer tissues), lower expression in kidney and spleen, and lowest in the adrenal.

It is found in the endoplasmic reticulum membrane. It catalyses the reaction an 11beta-hydroxysteroid + NADP(+) = an 11-oxosteroid + NADPH + H(+). It carries out the reaction corticosterone + NADP(+) = 11-dehydrocorticosterone + NADPH + H(+). The enzyme catalyses cortisone + NADPH + H(+) = cortisol + NADP(+). The catalysed reaction is a 7beta-hydroxysteroid + NADP(+) = a 7-oxosteroid + NADPH + H(+). It catalyses the reaction 7-oxocholesterol + NADPH + H(+) = 7beta-hydroxycholesterol + NADP(+). It carries out the reaction chenodeoxycholate + NADP(+) = 7-oxolithocholate + NADPH + H(+). The enzyme catalyses 7-oxolithocholate + NADPH + H(+) = ursodeoxycholate + NADP(+). The catalysed reaction is glycochenodeoxycholate + NADP(+) = 7-oxoglycolithocholate + NADPH + H(+). It catalyses the reaction taurochenodeoxycholate + NADP(+) = 7-oxotaurolithocholate + NADPH + H(+). It carries out the reaction tauroursodeoxycholate + NADP(+) = 7-oxotaurolithocholate + NADPH + H(+). The enzyme catalyses glycoursodeoxycholate + NADP(+) = 7-oxoglycolithocholate + NADPH + H(+). The catalysed reaction is 7-oxopregnenolone + NADPH + H(+) = 7beta-hydroxypregnenolone + NADP(+). It catalyses the reaction 3beta,7alpha-dihydroxyandrost-5-en-17-one + NADP(+) = 3beta-hydroxy-5-androstene-7,17-dione + NADPH + H(+). It carries out the reaction 3beta-hydroxy-5-androstene-7,17-dione + NADPH + H(+) = 3beta,7beta-dihydroxyandrost-5-en-17-one + NADP(+). The enzyme catalyses 3beta-hydroxy-5alpha-androstane-7,17-dione + NADPH + H(+) = 3beta,7beta-dihydroxy-5alpha-androstan-17-one + NADP(+). Functionally, controls the reversible conversion of biologically active glucocorticoids such as cortisone to cortisol, and 11-dehydrocorticosterone to corticosterone in the presence of NADP(H). Participates in the corticosteroid receptor-mediated anti-inflammatory response, as well as metabolic and homeostatic processes. Plays a role in the secretion of aqueous humor in the eye, maintaining a normotensive, intraocular environment. Bidirectional in vitro, predominantly functions as a reductase in vivo, thereby increasing the concentration of active glucocorticoids. It has broad substrate specificity, besides glucocorticoids, it accepts other steroid and sterol substrates. Interconverts 7-oxo- and 7-hydroxy-neurosteroids such as 7-oxopregnenolone and 7beta-hydroxypregnenolone, 7-oxodehydroepiandrosterone (3beta-hydroxy-5-androstene-7,17-dione) and 7beta-hydroxydehydroepiandrosterone (3beta,7beta-dihydroxyandrost-5-en-17-one), among others. Catalyzes the stereo-specific conversion of the major dietary oxysterol, 7-ketocholesterol (7-oxocholesterol), into the more polar 7-beta-hydroxycholesterol metabolite. 7-oxocholesterol is one of the most important oxysterols, it participates in several events such as induction of apoptosis, accumulation in atherosclerotic lesions, lipid peroxidation, and induction of foam cell formation. Mediates the 7-oxo reduction of 7-oxolithocholate mainly to chenodeoxycholate, and to a lesser extent to ursodeoxycholate, both in its free form and when conjugated to glycine or taurine, providing a link between glucocorticoid activation and bile acid metabolism. Catalyzes the synthesis of 7-beta-25-dihydroxycholesterol from 7-oxo-25-hydroxycholesterol in vitro, which acts as a ligand for the G-protein-coupled receptor (GPCR) Epstein-Barr virus-induced gene 2 (EBI2) and may thereby regulate immune cell migration. This is 11-beta-hydroxysteroid dehydrogenase 1 from Bos taurus (Bovine).